Consider the following 662-residue polypeptide: Probable lysophospholipase 3 (662 aa).

Residues 1 to 19 (MLFNCFGILALLQILPALA) form the signal peptide. Residues Asn74, Asn127, Asn162, Asn196, Asn266, Asn274, Asn303, Asn376, Asn406, Asn411, Asn483, Asn518, Asn523, Asn547, Asn556, Asn574, Asn596, and Asn613 are each glycosylated (N-linked (GlcNAc...) asparagine). Residues 76–617 (TCPSDYMLRP…EQYCWNGTTV (542 aa)) form the PLA2c domain.

This sequence belongs to the lysophospholipase family.

The protein localises to the secreted. It catalyses the reaction a 1-acyl-sn-glycero-3-phosphocholine + H2O = sn-glycerol 3-phosphocholine + a fatty acid + H(+). Its function is as follows. Catalyzes the release of fatty acids from lysophospholipids. The polypeptide is Probable lysophospholipase 3 (plb3) (Schizosaccharomyces pombe (strain 972 / ATCC 24843) (Fission yeast)).